Consider the following 769-residue polypeptide: Post-GPI attachment to proteins factor 6 (769 aa).

A signal peptide spans 1 to 33 (MGRVGAGGTAREAATGSLLLLLLLLARPPPAAA). The Extracellular segment spans residues 34 to 543 (SNSKESEAGL…STAQTVAQQR (510 aa)). Asn138 and Asn411 each carry an N-linked (GlcNAc...) asparagine glycan. Positions 495–531 (PCLNDCGPYGQCLLLRRYGYVYAGCSCKAGWRGWSCT) constitute an EGF-like domain. Intrachain disulfides connect Cys496/Cys506, Cys500/Cys519, and Cys521/Cys530. A helical transmembrane segment spans residues 544-564 (AAALLLTLSNLMFLAPIAISL). Residues 565–567 (HRS) lie on the Cytoplasmic side of the membrane. A helical membrane pass occupies residues 568 to 588 (FLVEASVYFYTMFFSTFYHAC). At 589–603 (DQPGEAVLCILSYDT) the chain is on the extracellular side. Residues 604–624 (LQYCDFLGSGASTWVTILCMA) form a helical membrane-spanning segment. Over 625 to 627 (RLK) the chain is Cytoplasmic. The helical transmembrane segment at 628-648 (TILKQVLLVLGTLVIAMSLQM) threads the bilayer. Over 649–651 (DRR) the chain is Extracellular. A helical membrane pass occupies residues 652–672 (GIWNLMGPCVFAFVIMASMWI). Residues 673-688 (YRCGHRGQCYPTSWQR) lie on the Cytoplasmic side of the membrane. The chain crosses the membrane as a helical span at residues 689–709 (WVFYLLPGISMASVGIAMYTS). Over 710–715 (MMTSDN) the chain is Extracellular. The helical transmembrane segment at 716–736 (YYYTHSIWHILLAGSAAFLLP) threads the bilayer. Residues 737 to 769 (PREEKAGSWACLQKFPCHYQICRNDRDELYTVT) are Cytoplasmic-facing.

Belongs to the TMEM8 family. In terms of processing, glycosylated.

The protein localises to the cell membrane. Its subcellular location is the lysosome membrane. It carries out the reaction a 1,2-diacyl-sn-glycero-3-phosphocholine + H2O = a 1-acyl-sn-glycero-3-phosphocholine + a fatty acid + H(+). Functionally, involved in the lipid remodeling steps of GPI-anchor maturation. Lipid remodeling steps consist in the generation of 2 saturated fatty chains at the sn-2 position of GPI-anchor proteins (GPI-AP). Has phospholipase A2 activity that removes an acyl-chain at the sn-2 position of GPI-anchors during the remodeling of GPI. Required for the shedding of the GPI-AP CRIPTO, but not CFC1, at the cell surface. Shedding of CRIPTO modulates Nodal signaling by allowing soluble CRIPTO to act as a Nodal coreceptor on other cells. Also indirectly involved in the translocation of RAC1 from the cytosol to the plasma membrane by maintaining the steady state amount of CAV1-enriched plasma membrane subdomains, stabilizing RAC1 at the plasma membrane. This Mus musculus (Mouse) protein is Post-GPI attachment to proteins factor 6.